The sequence spans 248 residues: Trypsin I-P38 (248 aa).

The N-terminal stretch at 1–15 (MKFLVLVAFLGVAVA) is a signal peptide. The propeptide at 16–25 (FPISDEDDDK) is activation peptide. Positions 26–246 (IVGGYSCARS…YVSWIKTTMS (221 aa)) constitute a Peptidase S1 domain. Intrachain disulfides connect Cys-32/Cys-162, Cys-50/Cys-66, Cys-134/Cys-235, Cys-141/Cys-208, Cys-173/Cys-187, and Cys-198/Cys-222. The active-site Charge relay system is His-65. Ca(2+) is bound by residues Glu-77, Asn-79, and Glu-87. The active-site Charge relay system is Asp-109. Ser-202 acts as the Charge relay system in catalysis.

Belongs to the peptidase S1 family. Requires Ca(2+) as cofactor. In terms of tissue distribution, high levels are seen in the pancreas while lower levels are found in the liver, spleen and thymus.

The protein resides in the secreted. The protein localises to the extracellular space. The catalysed reaction is Preferential cleavage: Arg-|-Xaa, Lys-|-Xaa.. This Gallus gallus (Chicken) protein is Trypsin I-P38.